Reading from the N-terminus, the 37-residue chain is Mau operon transcriptional activator (37 aa).

It belongs to the LysR transcriptional regulatory family.

In terms of biological role, transcriptional activator of the mau genes involved in methylamine metabolism. This chain is Mau operon transcriptional activator (mauR), found in Paracoccus versutus (Thiobacillus versutus).